The following is a 194-amino-acid chain: Calcium-binding protein J (194 aa).

EF-hand domains are found at residues 62–97 (WDKD…MTKA) and 98–133 (PVVE…AVAC). 9 residues coordinate Ca(2+): Asp-75, Asp-77, Asn-79, Glu-86, Asp-111, Asp-113, Ser-115, His-117, and Glu-122.

The protein belongs to the recoverin family.

This is Calcium-binding protein J (cbpJ) from Dictyostelium discoideum (Social amoeba).